Reading from the N-terminus, the 205-residue chain is Holliday junction branch migration complex subunit RuvA (205 aa).

The segment at 1 to 64 is domain I; it reads MIGRLRGIIL…EDAQLLYGFN (64 aa). The segment at 65-143 is domain II; sequence DKQERALFRE…GLNGDLFNNT (79 aa). Positions 144-156 are flexible linker; the sequence is GDIQLPASNSSQI. A domain III region spans residues 157 to 205; sequence SDADIEAEAASALVALGYKPQEASRLVSKIAKPGADCETLIRDALRAAL.

The protein belongs to the RuvA family. Homotetramer. Forms an RuvA(8)-RuvB(12)-Holliday junction (HJ) complex. HJ DNA is sandwiched between 2 RuvA tetramers; dsDNA enters through RuvA and exits via RuvB. An RuvB hexamer assembles on each DNA strand where it exits the tetramer. Each RuvB hexamer is contacted by two RuvA subunits (via domain III) on 2 adjacent RuvB subunits; this complex drives branch migration. In the full resolvosome a probable DNA-RuvA(4)-RuvB(12)-RuvC(2) complex forms which resolves the HJ.

The protein localises to the cytoplasm. The RuvA-RuvB-RuvC complex processes Holliday junction (HJ) DNA during genetic recombination and DNA repair, while the RuvA-RuvB complex plays an important role in the rescue of blocked DNA replication forks via replication fork reversal (RFR). RuvA specifically binds to HJ cruciform DNA, conferring on it an open structure. The RuvB hexamer acts as an ATP-dependent pump, pulling dsDNA into and through the RuvAB complex. HJ branch migration allows RuvC to scan DNA until it finds its consensus sequence, where it cleaves and resolves the cruciform DNA. The chain is Holliday junction branch migration complex subunit RuvA from Yersinia enterocolitica serotype O:8 / biotype 1B (strain NCTC 13174 / 8081).